The sequence spans 146 residues: Small ribosomal subunit protein uS9 (146 aa).

S3 is modified (phosphoserine). N6-acetyllysine is present on K60.

Belongs to the universal ribosomal protein uS9 family. In terms of assembly, component of the small ribosomal subunit. Part of the small subunit (SSU) processome, composed of more than 70 proteins and the RNA chaperone small nucleolar RNA (snoRNA) U3.

Its subcellular location is the cytoplasm. It localises to the nucleus. The protein localises to the nucleolus. Its function is as follows. Component of the small ribosomal subunit. The ribosome is a large ribonucleoprotein complex responsible for the synthesis of proteins in the cell. Part of the small subunit (SSU) processome, first precursor of the small eukaryotic ribosomal subunit. During the assembly of the SSU processome in the nucleolus, many ribosome biogenesis factors, an RNA chaperone and ribosomal proteins associate with the nascent pre-rRNA and work in concert to generate RNA folding, modifications, rearrangements and cleavage as well as targeted degradation of pre-ribosomal RNA by the RNA exosome. This chain is Small ribosomal subunit protein uS9 (RPS16), found in Bos taurus (Bovine).